Consider the following 301-residue polypeptide: Transmembrane protein 178A (301 aa).

The first 25 residues, 1 to 25, serve as a signal peptide directing secretion; the sequence is MEKRALVTAISLSMSLLALMLLVTA. The Extracellular portion of the chain corresponds to 26 to 183; the sequence is IFTDHWYETD…LLHLRRITAG (158 aa). N-linked (GlcNAc...) asparagine glycosylation occurs at asparagine 162. The helical transmembrane segment at 184–204 threads the bilayer; that stretch reads FLGMAAAVMLCGSIVAAVGFF. The Cytoplasmic segment spans residues 205 to 215; the sequence is WEESLTQHVSG. A helical membrane pass occupies residues 216–236; sequence LLFLMAGIFCTISLCTYAASV. Residues 237 to 258 are Extracellular-facing; sequence SYDLSRNPPFIYGLPSDVDHGY. Residues 259 to 279 form a helical membrane-spanning segment; the sequence is GWSIFCAWVSLGLTVASGCIC. The Cytoplasmic portion of the chain corresponds to 280–301; that stretch reads TTYPFLSRTKALRSKTARESSV.

Belongs to the TMEM178 family.

The protein localises to the endoplasmic reticulum membrane. In terms of biological role, may act as a negative regulator of osteoclast differentiation. The chain is Transmembrane protein 178A (tmem178a) from Danio rerio (Zebrafish).